The chain runs to 256 residues: uncharacterized protein (256 aa).

6 consecutive transmembrane segments (helical) span residues 6–26 (TSFI…VSFL), 29–49 (LALV…GTFI), 61–81 (ISGT…GLYF), 145–165 (IIGC…TGIA), 175–195 (YYFK…IWLI), and 218–238 (IGWL…AIQF).

It belongs to the DedA family.

It localises to the cell membrane. This is an uncharacterized protein from Buchnera aphidicola subsp. Acyrthosiphon pisum (strain APS) (Acyrthosiphon pisum symbiotic bacterium).